A 345-amino-acid chain; its full sequence is 3-dehydroquinate synthase (345 aa).

NAD(+) is bound by residues 86–90 (GALLD), 110–111 (TT), K123, and K132. Positions 165, 229, and 243 each coordinate Zn(2+).

It belongs to the sugar phosphate cyclases superfamily. Dehydroquinate synthase family. Requires NAD(+) as cofactor. Co(2+) is required as a cofactor. The cofactor is Zn(2+).

Its subcellular location is the cytoplasm. It carries out the reaction 7-phospho-2-dehydro-3-deoxy-D-arabino-heptonate = 3-dehydroquinate + phosphate. It functions in the pathway metabolic intermediate biosynthesis; chorismate biosynthesis; chorismate from D-erythrose 4-phosphate and phosphoenolpyruvate: step 2/7. Functionally, catalyzes the conversion of 3-deoxy-D-arabino-heptulosonate 7-phosphate (DAHP) to dehydroquinate (DHQ). The polypeptide is 3-dehydroquinate synthase (Pyrobaculum aerophilum (strain ATCC 51768 / DSM 7523 / JCM 9630 / CIP 104966 / NBRC 100827 / IM2)).